Reading from the N-terminus, the 277-residue chain is Phosphate import ATP-binding protein PstB (277 aa).

Residues 31-272 (IEVPGLSLYY…PAKKQTEDYI (242 aa)) form the ABC transporter domain. 63-70 (GPSGCGKS) provides a ligand contact to ATP.

Belongs to the ABC transporter superfamily. Phosphate importer (TC 3.A.1.7) family. The complex is composed of two ATP-binding proteins (PstB), two transmembrane proteins (PstC and PstA) and a solute-binding protein (PstS).

The protein resides in the cell inner membrane. It carries out the reaction phosphate(out) + ATP + H2O = ADP + 2 phosphate(in) + H(+). Functionally, part of the ABC transporter complex PstSACB involved in phosphate import. Responsible for energy coupling to the transport system. This Pseudomonas fluorescens (strain ATCC BAA-477 / NRRL B-23932 / Pf-5) protein is Phosphate import ATP-binding protein PstB.